A 407-amino-acid chain; its full sequence is MQKTSNTLALGSLTALFFLMGFITVLNDILIPHLKPIFDLTYFEASLIQFCFFGAYFIMGGVFGNVISKIGYPFGVVLGFVITASGCALFYPAAHFGSYGFFLGALFILASGIVCLQTAGNPFVTLLSKGKEARNLVLVQAFNSLGTTLGPIFGSLLIFSATKTSDNLSLIDKLADAKSVQMPYLGLAVFSLLLALVMYLLKLPDVEKEMPKETTQKSLFSHKHFVFGALGIFFYVGGEVAIGSFLVLSFEKLLNLDAQSSAHYLVYYWGGAMVGRFLGSALMNKIAPNKYLAFNALSSIILIALAILIGGKIALFALTFVGFFNSIMFPTIFSLATLNLGHLTSKASGVISMAIVGGALIPPIQGVVTDMLTATESNLLYAYSVPLLCYFYILFFALKGYKQEENS.

12 consecutive transmembrane segments (helical) span residues 11 to 31 (GSLT…DILI), 47 to 67 (LIQF…GNVI), 70 to 90 (IGYP…CALF), 96 to 116 (FGSY…IVCL), 139 to 159 (VQAF…LLIF), 180 to 200 (VQMP…VMYL), 225 to 245 (FVFG…IGSF), 263 to 283 (HYLV…SALM), 300 to 320 (IILI…ALTF), 321 to 341 (VGFF…LNLG), 349 to 369 (GVIS…GVVT), and 378 to 398 (NLLY…FFAL).

The protein belongs to the major facilitator superfamily. FHS transporter (TC 2.A.1.7) family.

It is found in the cell inner membrane. Intake of glucose and galactose. This is Putative glucose/galactose transporter (gluP) from Helicobacter pylori (strain J99 / ATCC 700824) (Campylobacter pylori J99).